The sequence spans 628 residues: Phomenoic acid biosynthesis cluster MFS-type transporter (628 aa).

The next 14 membrane-spanning stretches (helical) occupy residues 102–122 (IHGF…FLYA), 150–170 (VGFV…YGIL), 174–194 (WLYI…GAAP), 204–224 (VFAG…LSIN), 232–252 (AYLS…PVIG), 262–282 (WAFY…FFLL), 302–322 (FVGA…INFG), 329–349 (NSGT…AFAV), 375–395 (MLLF…IYFI), 407–427 (ALDS…TILV), 435–455 (FGYY…ANVF), 488–508 (GFEA…YAVI), 524–544 (IMIA…AVFI), and 595–615 (AKAF…SLGF).

It belongs to the major facilitator superfamily. TCR/Tet family.

It is found in the cell membrane. In terms of biological role, MFS-type transporter; part of the gene cluster that mediates the biosynthesis of phomenoic acid, a long chain aliphatic carboxylic acid that does not appear to be essential for pathogenicity but may play a role in allowing to outcompete other fungi in the environmental niche via its antifungal properties. Is probably involved in the efflux of phomenoic acid. The polypeptide is Phomenoic acid biosynthesis cluster MFS-type transporter (Leptosphaeria maculans (strain JN3 / isolate v23.1.3 / race Av1-4-5-6-7-8) (Blackleg fungus)).